The following is a 229-amino-acid chain: ABC transporter I family member 1 (229 aa).

The region spanning 11-228 (LLLQNVSCMR…LIDMLDRADI (218 aa)) is the ABC transporter domain. An ATP-binding site is contributed by 43-50 (GTNGSGKS).

This sequence belongs to the ABC transporter superfamily. ABCI family.

Its subcellular location is the membrane. The catalysed reaction is heme b(in) + ATP + H2O = heme b(out) + ADP + phosphate + H(+). Part of the ABC transporter complex CcmAB involved in the biogenesis of c-type cytochromes; once thought to export heme, this seems not to be the case, but its exact role is uncertain. Responsible for energy coupling to the transport system. The chain is ABC transporter I family member 1 (ABCI1) from Arabidopsis thaliana (Mouse-ear cress).